We begin with the raw amino-acid sequence, 1082 residues long: Mediator of RNA polymerase II transcription subunit 14 (1082 aa).

Disordered stretches follow at residues 1 to 80 and 319 to 343; these read MTTT…APPP and EATS…NLPL. An N-acetylthreonine modification is found at T2. S7 is subject to Phosphoserine. Basic and acidic residues predominate over residues 13–28; it reads NEERLSNEMHALKNRS. Positions 29–59 are enriched in polar residues; sequence EQNGQEQQGPVKNTQLHGPSATDPETTATQK. Residues 321-340 are compositionally biased toward low complexity; the sequence is TSTNGDSENNEENSSSNGNN. Position 1036 is a phosphothreonine (T1036).

This sequence belongs to the Mediator complex subunit 14 family. As to quaternary structure, component of the Mediator complex, which is composed of at least 21 subunits that form three structurally distinct submodules. The Mediator head module contains MED6, MED8, MED11, SRB4/MED17, SRB5/MED18, ROX3/MED19, SRB2/MED20 and SRB6/MED22, the middle module contains MED1, MED4, NUT1/MED5, MED7, CSE2/MED9, NUT2/MED10, SRB7/MED21 and SOH1/MED31, and the tail module contains MED2, PGD1/MED3, RGR1/MED14, GAL11/MED15 and SIN4/MED16. The head and the middle modules interact directly with RNA polymerase II, whereas the elongated tail module interacts with gene-specific regulatory proteins.

It localises to the nucleus. Functionally, component of the Mediator complex, a coactivator involved in the regulated transcription of nearly all RNA polymerase II-dependent genes. Mediator functions as a bridge to convey information from gene-specific regulatory proteins to the basal RNA polymerase II transcription machinery. The Mediator complex, having a compact conformation in its free form, is recruited to promoters by direct interactions with regulatory proteins and serves for the assembly of a functional preinitiation complex with RNA polymerase II and the general transcription factors. The Mediator complex unfolds to an extended conformation and partially surrounds RNA polymerase II, specifically interacting with the unphosphorylated form of the C-terminal domain (CTD) of RNA polymerase II. The Mediator complex dissociates from the RNA polymerase II holoenzyme and stays at the promoter when transcriptional elongation begins. The sequence is that of Mediator of RNA polymerase II transcription subunit 14 (RGR1) from Saccharomyces cerevisiae (strain ATCC 204508 / S288c) (Baker's yeast).